Consider the following 832-residue polypeptide: Elongation factor 2 (832 aa).

One can recognise a tr-type G domain in the interval 17–336; it reads HNIRNMSVIA…MIVTHLPSPA (320 aa). 26 to 33 serves as a coordination point for GTP; the sequence is AHVDHGKS. Phosphothreonine occurs at positions 57 and 59. GTP is bound by residues 152–155 and 207–209; these read NKVD and SGL. A disordered region spans residues 580 to 608; that stretch reads AEPLPDGLTDDIEEGKVSPRDDPKERSNL. The segment covering 593–608 has biased composition (basic and acidic residues); it reads EGKVSPRDDPKERSNL. Histidine 689 is modified (diphthamide).

Belongs to the TRAFAC class translation factor GTPase superfamily. Classic translation factor GTPase family. EF-G/EF-2 subfamily.

Its subcellular location is the cytoplasm. It catalyses the reaction GTP + H2O = GDP + phosphate + H(+). Its function is as follows. Catalyzes the GTP-dependent ribosomal translocation step during translation elongation. During this step, the ribosome changes from the pre-translocational (PRE) to the post-translocational (POST) state as the newly formed A-site-bound peptidyl-tRNA and P-site-bound deacylated tRNA move to the P and E sites, respectively. Catalyzes the coordinated movement of the two tRNA molecules, the mRNA and conformational changes in the ribosome. The polypeptide is Elongation factor 2 (Cryptosporidium parvum).